Here is a 378-residue protein sequence, read N- to C-terminus: Acetylornithine deacetylase (378 aa).

His-76 provides a ligand contact to Zn(2+). The active site involves Asp-78. Asp-108 serves as a coordination point for Zn(2+). Residue Glu-140 is part of the active site. Zn(2+)-binding residues include Glu-141, Glu-165, and His-351.

It belongs to the peptidase M20A family. ArgE subfamily. As to quaternary structure, homodimer. Zn(2+) serves as cofactor. Requires Co(2+) as cofactor. The cofactor is glutathione.

The protein resides in the cytoplasm. It carries out the reaction N(2)-acetyl-L-ornithine + H2O = L-ornithine + acetate. It participates in amino-acid biosynthesis; L-arginine biosynthesis; L-ornithine from N(2)-acetyl-L-ornithine (linear): step 1/1. Its function is as follows. Catalyzes the hydrolysis of the amide bond of N(2)-acetylated L-amino acids. Cleaves the acetyl group from N-acetyl-L-ornithine to form L-ornithine, an intermediate in L-arginine biosynthesis pathway, and a branchpoint in the synthesis of polyamines. The chain is Acetylornithine deacetylase from Vibrio vulnificus (strain CMCP6).